Here is a 92-residue protein sequence, read N- to C-terminus: Long neurotoxin 1 (92 aa).

A signal peptide spans 1–21 (MKTLLLTLVVVTIVCLDLGYT). 4 cysteine pairs are disulfide-bonded: cysteine 24–cysteine 42, cysteine 35–cysteine 63, cysteine 67–cysteine 79, and cysteine 80–cysteine 85.

Belongs to the three-finger toxin family. Long-chain subfamily. Type II alpha-neurotoxin sub-subfamily. As to expression, expressed by the venom gland.

It localises to the secreted. In terms of biological role, binds with high affinity to muscular (alpha-1/CHRNA1) and neuronal (alpha-7/CHRNA7) nicotinic acetylcholine receptor (nAChR) and inhibits acetylcholine from binding to the receptor, thereby impairing neuromuscular and neuronal transmission. The chain is Long neurotoxin 1 from Oxyuranus scutellatus scutellatus (Australian taipan).